The following is a 203-amino-acid chain: Outer-membrane lipoprotein LolB (203 aa).

An N-terminal signal peptide occupies residues 1-18 (MYRLLCLLALLTAAGLMG). Cys19 carries the N-palmitoyl cysteine lipid modification. The S-diacylglycerol cysteine moiety is linked to residue Cys19.

This sequence belongs to the LolB family. In terms of assembly, monomer.

It localises to the cell outer membrane. Functionally, plays a critical role in the incorporation of lipoproteins in the outer membrane after they are released by the LolA protein. The protein is Outer-membrane lipoprotein LolB of Cellvibrio japonicus (strain Ueda107) (Pseudomonas fluorescens subsp. cellulosa).